We begin with the raw amino-acid sequence, 436 residues long: ABC transporter permease YtrF (436 aa).

The first 31 residues, 1-31 (MRFKDQVHFIRRNMKKNRLRVFMTILATTMA), serve as a signal peptide directing secretion. The N-palmitoyl cysteine moiety is linked to residue Cys-32. Cys-32 is lipidated: S-diacylglycerol cysteine. The stretch at 115-165 (NMNDELKANMELEKGRVAKSENEIVVGYDFAKRLLTKKESEEYNKKIEEAK) forms a coiled coil. A run of 3 helical transmembrane segments spans residues 293 to 313 (FKIG…IGIF), 350 to 370 (YIGI…SYLV), and 396 to 416 (IPAS…VISG).

The protein belongs to the ABC-4 integral membrane protein family. In terms of assembly, the complex is composed of 2 ATP-binding proteins (YtrB and YtrE), 2 transmembrane proteins (YtrC and YtrD) and a solute-binding protein (YtrF).

It is found in the cell membrane. Part of the ABC transporter complex YtrBCDEF that plays a role in acetoin utilization during stationary phase and sporulation. The protein is ABC transporter permease YtrF (ytrF) of Bacillus subtilis (strain 168).